A 229-amino-acid polypeptide reads, in one-letter code: Orotidine 5'-phosphate decarboxylase (229 aa).

Substrate-binding positions include Asp10, Lys32, 59–68, Thr119, Arg180, Gln189, Gly209, and Arg210; that span reads DLKFHDIPNT. The Proton donor role is filled by Lys61.

It belongs to the OMP decarboxylase family. Type 1 subfamily. In terms of assembly, homodimer.

It carries out the reaction orotidine 5'-phosphate + H(+) = UMP + CO2. Its pathway is pyrimidine metabolism; UMP biosynthesis via de novo pathway; UMP from orotate: step 2/2. Functionally, catalyzes the decarboxylation of orotidine 5'-monophosphate (OMP) to uridine 5'-monophosphate (UMP). In Legionella pneumophila (strain Paris), this protein is Orotidine 5'-phosphate decarboxylase.